The following is a 186-amino-acid chain: Ribosome-recycling factor (186 aa).

Belongs to the RRF family.

It localises to the cytoplasm. Responsible for the release of ribosomes from messenger RNA at the termination of protein biosynthesis. May increase the efficiency of translation by recycling ribosomes from one round of translation to another. This is Ribosome-recycling factor from Leifsonia xyli subsp. xyli (strain CTCB07).